Reading from the N-terminus, the 327-residue chain is Polyprenyl transferase esdpC (327 aa).

8 consecutive transmembrane segments (helical) span residues 35 to 54 (YNPL…AGAS), 73 to 93 (LLVF…NDWI), 118 to 138 (EALI…AYTL), 140 to 160 (GHNV…YPFG), 171 to 191 (YPQY…WLAI), 202 to 222 (IMES…LNTA), 239 to 259 (VYFL…ALVL), and 307 to 327 (ENFA…LLKS).

This sequence belongs to the UbiA prenyltransferase family. Mg(2+) is required as a cofactor.

Its subcellular location is the membrane. The protein operates within secondary metabolite biosynthesis; terpenoid biosynthesis. Functionally, olyprenyl transferase; part of the cluster that mediates the biosynthesis of shearones, diterpenoid pyrones (DPs) which are structurally diverse meroterpenoids consisting of a diterpene linked by a pyrone, and which may exhibit a range of bioactivities. Within the pathway, esdpC takes part to the biosynthesis of the molecular scaffold by catalyzing the C-3 geranylgeranylation reaction of the alpha-pyrone produced by esdpA. The molecular scaffold is commonly biosynthesized by a series of enzymes including the non-reducing polyketide synthase (NR-PKS) esdpA that generates an alpha-pyrone; the prenyltransferase esdpC that attaches a geranylgeranyl pyrophosphate (GGPP) produced by the GGPP synthase (GGPPS) esdpD onto the pyrone unit; the FAD-dependent monooxygenase esdpE that converts an olefin on the diterpene unit into an epoxide; and the terpene cyclase esdpB that catalyzes the cyclization reactions to give the molecular backbone shearone A. In the modification steps, esdpF oxidizes the hydroxy group to a ketone at C-3 and esdpG then attaches hydroxy groups at both C-11 and C-12. After that, esdpI hydroxylates at C-20 and esdpH hydroxylates at C-6'. The ether bridge is generated by nucleophilic attack of the hydroxy group at C-20 to the carbonyl carbon at C-3. EsdpH can also functions prior to esdpI. The different combinations of these modification enzymes lead to the production of diverse shearone derivatives, shearone I being the end product of the pathway. The alpha-ketoglutarate-dependent dioxygenase esdpJ seems not to be involved in this pathway. The polypeptide is Polyprenyl transferase esdpC (Penicillium shearii (Eupenicillium shearii)).